The primary structure comprises 236 residues: Thiamine import ATP-binding protein ThiQ (236 aa).

An ABC transporter domain is found at 2–230; the sequence is LKLEKITYLY…SAAKASVLGI (229 aa). Position 32-39 (32-39) interacts with ATP; the sequence is GPSGAGKS.

Belongs to the ABC transporter superfamily. Thiamine importer (TC 3.A.1.19.1) family. In terms of assembly, the complex is composed of two ATP-binding proteins (ThiQ), two transmembrane proteins (ThiP) and a solute-binding protein (ThiB).

Its subcellular location is the cell inner membrane. The enzyme catalyses thiamine(out) + ATP + H2O = thiamine(in) + ADP + phosphate + H(+). Functionally, part of the ABC transporter complex ThiBPQ involved in thiamine import. Responsible for energy coupling to the transport system. The polypeptide is Thiamine import ATP-binding protein ThiQ (Yersinia pestis bv. Antiqua (strain Antiqua)).